Here is a 398-residue protein sequence, read N- to C-terminus: Succinate--CoA ligase [ADP-forming] subunit beta (398 aa).

Residues 9 to 254 enclose the ATP-grasp domain; sequence KRLLHEYGAP…LSEEDPKEIE (246 aa). ATP is bound by residues lysine 46, 53-55, glutamate 109, alanine 112, and glutamate 117; that span reads GRG. Residues asparagine 209 and aspartate 223 each coordinate Mg(2+). Substrate is bound by residues asparagine 274 and 331–333; that span reads GIM.

It belongs to the succinate/malate CoA ligase beta subunit family. Heterotetramer of two alpha and two beta subunits. Requires Mg(2+) as cofactor.

It carries out the reaction succinate + ATP + CoA = succinyl-CoA + ADP + phosphate. The enzyme catalyses GTP + succinate + CoA = succinyl-CoA + GDP + phosphate. The protein operates within carbohydrate metabolism; tricarboxylic acid cycle; succinate from succinyl-CoA (ligase route): step 1/1. Functionally, succinyl-CoA synthetase functions in the citric acid cycle (TCA), coupling the hydrolysis of succinyl-CoA to the synthesis of either ATP or GTP and thus represents the only step of substrate-level phosphorylation in the TCA. The beta subunit provides nucleotide specificity of the enzyme and binds the substrate succinate, while the binding sites for coenzyme A and phosphate are found in the alpha subunit. In Bartonella quintana (strain Toulouse) (Rochalimaea quintana), this protein is Succinate--CoA ligase [ADP-forming] subunit beta.